The following is a 329-amino-acid chain: Mas-related G-protein coupled receptor member X2 (329 aa).

At 1-33 (MDPTTPAWGTESTTMDGNDQSLPLLCDKEALIP) the chain is on the extracellular side. The chain crosses the membrane as a helical span at residues 34-54 (VFLILFIALVGLVGNGFVLWL). Residues 55 to 63 (LGFRMSRNA) lie on the Cytoplasmic side of the membrane. A helical membrane pass occupies residues 64-84 (FSVYVLSLAGADFLFLCFQII). Residues 85-96 (NCLVYLRDFFCS) are Extracellular-facing. Residues 97 to 117 (ISINFPSXFTTVMTCAYLAGL) form a helical membrane-spanning segment. The Cytoplasmic portion of the chain corresponds to 118-144 (SMLSTISTERCLSVLWPIWYRCRRPRH). A helical membrane pass occupies residues 145–165 (LSAVVCVLLWALSLLLSILEG). Residues 166–184 (KFCGFLFSDGDFGWCQIFD) lie on the Extracellular side of the membrane. The chain crosses the membrane as a helical span at residues 185-205 (FITAAWLIFLFVVLCASSLAL). Residues 206–228 (LVRILCGSRGLPLTRLYLTILLT) are Cytoplasmic-facing. A helical membrane pass occupies residues 229 to 249 (VLVFLLCGLPFGIQWFLILGF). The Extracellular portion of the chain corresponds to 250–263 (WNSDVLLCHIHLVS). The chain crosses the membrane as a helical span at residues 264–284 (VVLSSLNSSANPIIYFFVGSF). Residues 285–329 (RKQWRLQQPILKLAFQRALQDTAEVDHSEGCFPQGTSEMSRSSLV) lie on the Cytoplasmic side of the membrane.

Belongs to the G-protein coupled receptor 1 family. Mas subfamily.

It localises to the cell membrane. Its function is as follows. Mast cell-specific receptor for basic secretagogues, i.e. cationic amphiphilic drugs, as well as endo- or exogenous peptides, consisting of a basic head group and a hydrophobic core. Recognizes and binds small molecules containing a cyclized tetrahydroisoquinoline (THIQ), such as non-steroidal neuromuscular blocking drugs (NMBDs), including tubocurarine and atracurium. In response to these compounds, mediates pseudo-allergic reactions characterized by histamine release, inflammation and airway contraction. The sequence is that of Mas-related G-protein coupled receptor member X2 (MRGPRX2) from Hoolock hoolock (Western hoolock gibbon).